Here is a 455-residue protein sequence, read N- to C-terminus: mRNA cleavage and polyadenylation factor CLP1 (455 aa).

ATP-binding residues include Glu28 and Lys67. The interval 112 to 131 (EAAARNNGGGRSAPHGPRVL) is disordered. Residue 137-142 (GCGRTS) coordinates ATP.

This sequence belongs to the Clp1 family. Clp1 subfamily. Component of a pre-mRNA cleavage factor complex. Interacts directly with PCF11.

The protein localises to the nucleus. In terms of biological role, required for endonucleolytic cleavage during polyadenylation-dependent pre-mRNA 3'-end formation. The polypeptide is mRNA cleavage and polyadenylation factor CLP1 (Pyricularia oryzae (strain 70-15 / ATCC MYA-4617 / FGSC 8958) (Rice blast fungus)).